Consider the following 269-residue polypeptide: Hydroxyacylglutathione hydrolase (269 aa).

The Zn(2+) site is built by His-56, His-58, Asp-60, His-61, His-115, Asp-137, and His-177.

Belongs to the metallo-beta-lactamase superfamily. Glyoxalase II family. In terms of assembly, monomer. Zn(2+) is required as a cofactor.

It catalyses the reaction an S-(2-hydroxyacyl)glutathione + H2O = a 2-hydroxy carboxylate + glutathione + H(+). It functions in the pathway secondary metabolite metabolism; methylglyoxal degradation; (R)-lactate from methylglyoxal: step 2/2. Its function is as follows. Thiolesterase that catalyzes the hydrolysis of S-D-lactoyl-glutathione to form glutathione and D-lactic acid. The sequence is that of Hydroxyacylglutathione hydrolase from Leptospira borgpetersenii serovar Hardjo-bovis (strain JB197).